We begin with the raw amino-acid sequence, 371 residues long: Aminomethyltransferase (371 aa).

The protein belongs to the GcvT family. As to quaternary structure, the glycine cleavage system is composed of four proteins: P, T, L and H.

It carries out the reaction N(6)-[(R)-S(8)-aminomethyldihydrolipoyl]-L-lysyl-[protein] + (6S)-5,6,7,8-tetrahydrofolate = N(6)-[(R)-dihydrolipoyl]-L-lysyl-[protein] + (6R)-5,10-methylene-5,6,7,8-tetrahydrofolate + NH4(+). In terms of biological role, the glycine cleavage system catalyzes the degradation of glycine. In Leptospira interrogans serogroup Icterohaemorrhagiae serovar Lai (strain 56601), this protein is Aminomethyltransferase.